Here is a 660-residue protein sequence, read N- to C-terminus: MSENSSPKLESTSAAAASTKKPFPEWIKPKGKETELLINNSLTGGKVPFVFNESGKGRSLTWYACGPTVYDASHMGHARTYISFDIIRRIMKNYLGFNIQYVMNITDIDDKIIIRANENGISHSDLSKKWETAFFEDMKLLNVLPPDALTRVTEYVPQIVEYVEKIISNGFAYESNGSVYFDTVAFSKAHDYGKLEPNSVGNEKLAAEGEGSLTATSAVSEKRSGFDFALWKKSKPGEPVWNSPWGEGRPGWHIECSAMASDLLGGNIDIHSGGSDLKFPHHDNELAQSEAFYGNRQWINYFVHSGHLLIDGLKMSKSLKNFITIKQALEKYTSRQMRMFFILHKYDKAMNYSPESMGYAIEMEKTFVEFFHTAKQILRDSPLSLPQFWTQAEKDLNKHLQNANDQVHQFILDNFNTSDALKTLSDLVNKTNVYIRSCAEQKTNPRLNLISAIAEYITYIFSVFGLTESSTASSMIGFGSAGKGNIEEEMTPILNALTQFRSEVRASAIAKDTTSILKTCDNLRDEVLPLLGVKIDDKSATTAMWKFEDKETLKKEIEQKKEIEKKKQADKEEKEKKLKEKFEKSKIPPQQLFINETDKYSKFNELGMPTHDKEGVEITKSQLKKLQKEYDNQTKEHNNYLKSLSTSTSSPTLTSTQSPQ.

Residues 1–10 (MSENSSPKLE) show a composition bias toward polar residues. The tract at residues 1–20 (MSENSSPKLESTSAAAASTK) is disordered. Cysteine 65 contacts Zn(2+). A 'HIGH' region motif is present at residues 67–77 (PTVYDASHMGH). Residues cysteine 256, histidine 281, and glutamate 285 each contribute to the Zn(2+) site. Residues 314–318 (KMSKS) carry the 'KMSKS' region motif. ATP is bound at residue lysine 317. Disordered stretches follow at residues 563 to 584 (IEKKKQADKEEKEKKLKEKFEK) and 627 to 660 (QKEYDNQTKEHNNYLKSLSTSTSSPTLTSTQSPQ). Residues 627-639 (QKEYDNQTKEHNN) are compositionally biased toward basic and acidic residues. The segment covering 643–660 (SLSTSTSSPTLTSTQSPQ) has biased composition (low complexity).

Belongs to the class-I aminoacyl-tRNA synthetase family. Zn(2+) serves as cofactor.

It localises to the cytoplasm. It carries out the reaction tRNA(Cys) + L-cysteine + ATP = L-cysteinyl-tRNA(Cys) + AMP + diphosphate. This chain is Cysteine--tRNA ligase, cytoplasmic (cysS), found in Dictyostelium discoideum (Social amoeba).